The sequence spans 262 residues: tRNA pseudouridine synthase A (262 aa).

The active-site Nucleophile is the D51. Y109 serves as a coordination point for substrate.

This sequence belongs to the tRNA pseudouridine synthase TruA family. As to quaternary structure, homodimer.

It catalyses the reaction uridine(38/39/40) in tRNA = pseudouridine(38/39/40) in tRNA. In terms of biological role, formation of pseudouridine at positions 38, 39 and 40 in the anticodon stem and loop of transfer RNAs. This chain is tRNA pseudouridine synthase A, found in Actinobacillus pleuropneumoniae serotype 7 (strain AP76).